Reading from the N-terminus, the 369-residue chain is LIM homeobox transcription factor 1-beta (369 aa).

2 LIM zinc-binding domains span residues 23–73 (CEGC…CKQD) and 82–135 (CSGC…CKGD). A disordered region spans residues 143-196 (LSSVSPDESDSVKSEDEDGDMKPAKGQGSQSKGGGDDGKDPRRPKRPRTILTTQ). A DNA-binding region (homeobox) is located at residues 186–245 (PKRPRTILTTQQRRAFKASFEVSSKPCRKVRETLAAETGLSVRVVQVWFQNQRAKMKKLA).

Interacts with DHX9.

The protein resides in the nucleus. In terms of biological role, transcription factor involved in the regulation of podocyte-expressed genes. Essential for the specification of dorsal limb fate at both the zeugopodal and autopodal levels. This Mesocricetus auratus (Golden hamster) protein is LIM homeobox transcription factor 1-beta (LMX1B).